A 403-amino-acid polypeptide reads, in one-letter code: Histidine--tRNA ligase (403 aa).

The protein belongs to the class-II aminoacyl-tRNA synthetase family. Homodimer.

The protein resides in the cytoplasm. The enzyme catalyses tRNA(His) + L-histidine + ATP = L-histidyl-tRNA(His) + AMP + diphosphate + H(+). This chain is Histidine--tRNA ligase, found in Sulfurimonas denitrificans (strain ATCC 33889 / DSM 1251) (Thiomicrospira denitrificans (strain ATCC 33889 / DSM 1251)).